We begin with the raw amino-acid sequence, 513 residues long: Autophagy-related protein 18 (513 aa).

The WD 1 repeat unit spans residues 2–40; that stretch reads SDLPIINFINFNQNGTCISIGTSQGFKIFNCEPFGRFYQ. The tract at residues 167–225 is disordered; that stretch reads NNINIKKSDAAEDPLRKDHFAYDPSDHSHPQSTTESTSNNHNRTYSSGNNNNTNSNPNK. A compositionally biased stretch (basic and acidic residues) spans 172–195; the sequence is KKSDAAEDPLRKDHFAYDPSDHSH. Residues 205–225 are compositionally biased toward low complexity; sequence NNHNRTYSSGNNNNTNSNPNK. One copy of the WD 2 repeat lies at 248–288; it reads AHKGEIAALKLSADGTLLATASEKGTIIRVFNVENGSKVYQ. Residues 289-292 form a necessary for proper localization to vacuole membrane region; sequence FRRG. Residues 289–293 carry the L/FRRG motif motif; that stretch reads FRRGT. A WD 3 repeat occupies 293–332; that stretch reads TYSTKISSLSFSKDNQFLAVCSSSKTVHIFKLGEKIIDNT. Residues 333-398 are disordered; sequence KPNELNSDDD…TVGRMIRKSS (66 aa). Acidic residues predominate over residues 338–369; it reads NSDDDMDDDLLPQFENGDDEEEVDEETLDEEA.

The protein belongs to the WD repeat PROPPIN family. Component of the PI(3,5)P2 regulatory complex. Interacts with ATG2 and ATG9. The ATG2-ATG18 complex is essential for autophagosome formation.

The protein resides in the preautophagosomal structure membrane. Its subcellular location is the vacuole membrane. It localises to the endosome membrane. Component of the PI(3,5)P2 regulatory complex that regulates both the synthesis and turnover of phosphatidylinositol 3,5-bisphosphate (PtdIns(3,5)P2). Plays an important role in osmotically-induced vacuole fragmentation. Required for cytoplasm to vacuole transport (Cvt) vesicle formation, pexophagy and starvation-induced autophagy. Involved in correct ATG9 trafficking to the pre-autophagosomal structure. With ATG2, protects ATG8 from ATG4-mediated cleavage. In Kluyveromyces marxianus (strain DMKU3-1042 / BCC 29191 / NBRC 104275) (Yeast), this protein is Autophagy-related protein 18.